We begin with the raw amino-acid sequence, 68 residues long: MNKKIKIPKDSKAINYKTTDLIREFISDRGKIIPQRITKSTRKKHKLIEKAIKQARLIGLMPFKQKNW.

The protein belongs to the bacterial ribosomal protein bS18 family. As to quaternary structure, part of the 30S ribosomal subunit.

The protein localises to the plastid. The protein resides in the chloroplast. The chain is Small ribosomal subunit protein bS18c (rps18) from Cyanidium caldarium (Red alga).